Here is a 141-residue protein sequence, read N- to C-terminus: Putative pre-16S rRNA nuclease (141 aa).

The protein belongs to the YqgF nuclease family.

The protein localises to the cytoplasm. In terms of biological role, could be a nuclease involved in processing of the 5'-end of pre-16S rRNA. In Aliivibrio salmonicida (strain LFI1238) (Vibrio salmonicida (strain LFI1238)), this protein is Putative pre-16S rRNA nuclease.